The sequence spans 157 residues: S-ribosylhomocysteine lyase (157 aa).

Fe cation-binding residues include H54, H58, and C126.

The protein belongs to the LuxS family. Homodimer. The cofactor is Fe cation.

The enzyme catalyses S-(5-deoxy-D-ribos-5-yl)-L-homocysteine = (S)-4,5-dihydroxypentane-2,3-dione + L-homocysteine. In terms of biological role, involved in the synthesis of autoinducer 2 (AI-2) which is secreted by bacteria and is used to communicate both the cell density and the metabolic potential of the environment. The regulation of gene expression in response to changes in cell density is called quorum sensing. Catalyzes the transformation of S-ribosylhomocysteine (RHC) to homocysteine (HC) and 4,5-dihydroxy-2,3-pentadione (DPD). The protein is S-ribosylhomocysteine lyase of Bacillus anthracis (strain A0248).